We begin with the raw amino-acid sequence, 357 residues long: Hydroxyproline O-arabinosyltransferase RDN1 (357 aa).

The chain crosses the membrane as a helical; Signal-anchor span at residues 13-33 (LLMLLMVLGFSFATYNLVFMM).

Expressed in the vasculature of leaves, petioles, stems and roots. Expressed in the vascular cylinder throughout the root, and nodule vasculature.

The protein localises to the golgi apparatus membrane. It carries out the reaction trans-4-hydroxy-L-prolyl-[protein] + UDP-beta-L-arabinofuranose = O-(beta-L-arabinofuranosyl)-trans-4-hydroxy-L-prolyl-[protein] + UDP + H(+). Functionally, probable glycosyltransferase involved in the O-arabinosylation of several proteins including extensins and small signaling peptides. Catalyzes the transfer of the initial L-arabinose to the hydroxyl group of Hyp residues. Probably involved in the arabinosylation of CLE12, a signaling peptide that moves from root to shoot, to interact with SUNN receptor kinase signaling that regulates nodulation. Involved in long distance nodulation signaling events. Involved in the autoregulation of nodulation (AON), a long distance systemic signaling from root to shoot and back again, which allows legumes to limit the number of root nodules formed based on available nitrogen and previous rhizobial colonization. Functions in the root, upstream of the shoot receptor kinase SUNN and via CLE peptide, to control AON. In Medicago truncatula (Barrel medic), this protein is Hydroxyproline O-arabinosyltransferase RDN1.